The primary structure comprises 214 residues: tRNA (guanine-N(7)-)-methyltransferase (214 aa).

S-adenosyl-L-methionine is bound by residues Glu-43, Glu-68, Asn-99, and Asp-121. Residue Asp-121 is part of the active site. Residues Lys-125, Asp-157, and 194–197 (TEYE) contribute to the substrate site.

The protein belongs to the class I-like SAM-binding methyltransferase superfamily. TrmB family.

It carries out the reaction guanosine(46) in tRNA + S-adenosyl-L-methionine = N(7)-methylguanosine(46) in tRNA + S-adenosyl-L-homocysteine. The protein operates within tRNA modification; N(7)-methylguanine-tRNA biosynthesis. Its function is as follows. Catalyzes the formation of N(7)-methylguanine at position 46 (m7G46) in tRNA. This Alkaliphilus metalliredigens (strain QYMF) protein is tRNA (guanine-N(7)-)-methyltransferase.